The following is a 470-amino-acid chain: MLDKEVLVIGAGLAGSEAAWQLANSGVPVKLVEMRPIKSTPAHHTSEFGELVCSNSFGALSPDRAAGLLQKELRFFKSLIVQTADKFAVPAGGALAVDRSKFSYALTEQLSNHPLVEIKRFEQLDIPSEENITILATGPLTADDLSYKIQDFTGIDDCHFFDAASPIIYGDSIDQEIVFKASRYDKGDPAYLNCPMDENKYIHFRNELIEGEQANLKDFEKESANFFEACLPIEEIARRGVDTMRYGPLKSIGLWNPKWGDLFDRENRLKKRPHAVVQLRKEDLEGKLLNMVGFQTNLKWSEQKRIFRMIPGLEKAEFVRFGVMHRNTFLESPKLLLPTLQFMKRENLFAAGQITGTEGYAAAAAGGLLAGINASLLAKGKKPVSFPDESMIGSLMNFISNKNQILSNQKKNKFQPMPASFGLVPELTKRIKDKRLRYKAYQERSTEALNDFKNKLDSCFDKDHLLSKIY.

Residue 10-15 participates in FAD binding; that stretch reads GAGLAG.

The protein belongs to the MnmG family. TrmFO subfamily. Requires FAD as cofactor.

It localises to the cytoplasm. The catalysed reaction is uridine(54) in tRNA + (6R)-5,10-methylene-5,6,7,8-tetrahydrofolate + NADH + H(+) = 5-methyluridine(54) in tRNA + (6S)-5,6,7,8-tetrahydrofolate + NAD(+). It carries out the reaction uridine(54) in tRNA + (6R)-5,10-methylene-5,6,7,8-tetrahydrofolate + NADPH + H(+) = 5-methyluridine(54) in tRNA + (6S)-5,6,7,8-tetrahydrofolate + NADP(+). Catalyzes the folate-dependent formation of 5-methyl-uridine at position 54 (M-5-U54) in all tRNAs. This Prochlorococcus marinus (strain MIT 9301) protein is Methylenetetrahydrofolate--tRNA-(uracil-5-)-methyltransferase TrmFO.